Consider the following 701-residue polypeptide: Elongation factor G (701 aa).

The 281-residue stretch at 10–290 folds into the tr-type G domain; the sequence is AKVRNIGIMA…AVVDYLPSPL (281 aa). Residues 19–26, 83–87, and 137–140 contribute to the GTP site; these read AHIDAGKT, DTPGH, and NKMD.

The protein belongs to the TRAFAC class translation factor GTPase superfamily. Classic translation factor GTPase family. EF-G/EF-2 subfamily.

The protein localises to the cytoplasm. Catalyzes the GTP-dependent ribosomal translocation step during translation elongation. During this step, the ribosome changes from the pre-translocational (PRE) to the post-translocational (POST) state as the newly formed A-site-bound peptidyl-tRNA and P-site-bound deacylated tRNA move to the P and E sites, respectively. Catalyzes the coordinated movement of the two tRNA molecules, the mRNA and conformational changes in the ribosome. In Tropheryma whipplei (strain Twist) (Whipple's bacillus), this protein is Elongation factor G.